The chain runs to 98 residues: Peptides MS9.1 (98 aa).

A signal peptide spans 1–21 (MKQSLILAVLCLALVFATIEA). The propeptide occupies 22-27 (KPKADP). Intrachain disulfides connect cysteine 34/cysteine 46 and cysteine 37/cysteine 52. 2 consecutive propeptides follow at residues 63 to 64 (DP) and 92 to 98 (DPVRDAE).

The protein belongs to the sea anemone BBH family.

It localises to the secreted. Its subcellular location is the nematocyst. Acts as a positive modulator of mammalian TRPA1, a non-selective cation channel involved in detection of pain, in vitro yet has an analgesic and anti-inflammatory effect in vivo. The chain is Peptides MS9.1 from Metridium senile (Brown sea anemone).